We begin with the raw amino-acid sequence, 684 residues long: DNA ligase (684 aa).

Residues 34–38, 83–84, and E117 contribute to the NAD(+) site; these read DYDFD and SL. K119 acts as the N6-AMP-lysine intermediate in catalysis. The NAD(+) site is built by R140, E188, K301, and K325. Positions 419, 422, 437, and 443 each coordinate Zn(2+). The BRCT domain maps to 602-684; the sequence is DAPQTFAGMT…QTMLAAESGD (83 aa).

It belongs to the NAD-dependent DNA ligase family. LigA subfamily. Mg(2+) is required as a cofactor. The cofactor is Mn(2+).

The catalysed reaction is NAD(+) + (deoxyribonucleotide)n-3'-hydroxyl + 5'-phospho-(deoxyribonucleotide)m = (deoxyribonucleotide)n+m + AMP + beta-nicotinamide D-nucleotide.. DNA ligase that catalyzes the formation of phosphodiester linkages between 5'-phosphoryl and 3'-hydroxyl groups in double-stranded DNA using NAD as a coenzyme and as the energy source for the reaction. It is essential for DNA replication and repair of damaged DNA. The polypeptide is DNA ligase (Chloroherpeton thalassium (strain ATCC 35110 / GB-78)).